The following is an 840-amino-acid chain: Phosphatidylinositol-glycan-specific phospholipase D (840 aa).

The N-terminal stretch at 1-23 (MSAFRLWPGLLIMLGSLCHRGSP) is a signal peptide. 5 N-linked (GlcNAc...) asparagine glycosylation sites follow: Asn94, Asn271, Asn292, Asn307, and Asn321. FG-GAP repeat units follow at residues 367-428 (SPLA…GLPP), 436-497 (EAHR…GGMS), 499-559 (SPNI…LSDK), 563-623 (NVEA…SLGR), 633-693 (QSWF…GATR), 704-770 (LLLS…TLGD), and 788-840 (QYVL…LGSD). N-linked (GlcNAc...) asparagine glycosylation is found at Asn501, Asn568, Asn591, Asn604, and Asn659.

Belongs to the GPLD1 family. Monomer.

The protein localises to the secreted. It catalyses the reaction a 6-(alpha-D-glucosaminyl)-1-(1,2-diacyl-sn-glycero-3-phospho)-1D-myo-inositol + H2O = 6-(alpha-D-glucosaminyl)-1D-myo-inositol + a 1,2-diacyl-sn-glycero-3-phosphate + H(+). Functionally, this protein hydrolyzes the inositol phosphate linkage in proteins anchored by phosphatidylinositol glycans (GPI-anchor) thus releasing these proteins from the membrane. The sequence is that of Phosphatidylinositol-glycan-specific phospholipase D (GPLD1) from Homo sapiens (Human).